The sequence spans 182 residues: Mid1-interacting protein 1 (182 aa).

The residue at position 1 (M1) is an N-acetylmethionine. The tract at residues 55 to 75 (VGGSGGCLEERTTPAPSPGSA) is disordered. Residues S71, S74, and S78 each carry the phosphoserine modification.

This sequence belongs to the SPOT14 family. In terms of assembly, homodimer in the absence of THRSP. Heterodimer with THRSP. The homodimer interacts with ACACA and ACACB. Promotes polymerization of Acetyl-CoA carboxylase to form complexes that contain MID1IP1 and ACACA and/or ACACB. Interaction with THRSP interferes with ACACA binding. During embryonic development, expressed mainly in the neuroepithelial midline, urogenital apparatus and digits. Detected in adult white fat, liver, heart, brain and kidney. Expressed at very low levels in lactating mammary gland.

The protein localises to the nucleus. It is found in the cytoplasm. It localises to the cytoskeleton. In terms of biological role, plays a role in the regulation of lipogenesis in liver. Up-regulates ACACA enzyme activity. Required for efficient lipid biosynthesis, including triacylglycerol, diacylglycerol and phospholipid. Involved in stabilization of microtubules. The sequence is that of Mid1-interacting protein 1 (Mid1ip1) from Mus musculus (Mouse).